The chain runs to 550 residues: MELVDTPSLEVFEDVVVDRQVAGFDPSFWGDYFITNQKSQSEAWMNERAEELKNEVRSMFQNVTGILQTMNLIDTIQLLGLDYHFMEEIAKALDHLKDVDMSKYGLYEVALHFRLLRQKGFNISSDVFKKYKDKEGKFMEELKDDAKGLLSLYNAAYFGTKEETILDEAISFTKDNLTSLLKDLNPPFAKLVSLTLKTPIQRSMKRIFTRSYISIYQDEPTLNETILELAKLDFNMLQCLHQKELKKICAWWNNLNLDIMHLNFIRDRVVECYCWSMVIRHEPSCSRARLISTKLLMLITVLDDTYDSYSTLEESRLLTDAIQRWNPNEVDQLPEYLRDFFLKMLNIFQEFENELAPEEKFRILYLKEEWKIQSQSYFKECQWRDDNYVPKLEEHMRLSIISVGFVLFYCGFLSGMEEAVATKDAFEWFASFPKIIEACATIIRITNDITSMEREQKRAHVASTVDCYMKEYGTSKDVACEKLLGFVEDAWKTINEELLTETGLSREVIELSFHSAQTTEFVYKHVDAFTEPNTTMKENIFSLLVHPIPI.

Mg(2+) contacts are provided by Asp303, Asp307, Ser451, and Glu455. Positions 303–307 match the DDXXD motif motif; sequence DDTYD.

This sequence belongs to the terpene synthase family. Tpsa subfamily. It depends on Mg(2+) as a cofactor. Mn(2+) is required as a cofactor. Expressed only in young rhizomes. Not detected in leaves, roots and mature rhizomes.

The enzyme catalyses (2E,6E)-farnesyl diphosphate = (S)-beta-bisabolene + diphosphate. In terms of biological role, sesquiterpene synthase involved in the biosynthesis of bisabolene. This is (S)-beta-bisabolene synthase (TPS1) from Zingiber officinale (Ginger).